Consider the following 185-residue polypeptide: Peptidyl-tRNA hydrolase (185 aa).

Tyr-14 is a tRNA binding site. His-19 functions as the Proton acceptor in the catalytic mechanism. Tyr-65, Asn-67, and Asn-113 together coordinate tRNA.

The protein belongs to the PTH family. Monomer.

The protein resides in the cytoplasm. It catalyses the reaction an N-acyl-L-alpha-aminoacyl-tRNA + H2O = an N-acyl-L-amino acid + a tRNA + H(+). Functionally, hydrolyzes ribosome-free peptidyl-tRNAs (with 1 or more amino acids incorporated), which drop off the ribosome during protein synthesis, or as a result of ribosome stalling. Its function is as follows. Catalyzes the release of premature peptidyl moieties from peptidyl-tRNA molecules trapped in stalled 50S ribosomal subunits, and thus maintains levels of free tRNAs and 50S ribosomes. The chain is Peptidyl-tRNA hydrolase from Rickettsia bellii (strain OSU 85-389).